Reading from the N-terminus, the 134-residue chain is U34-theraphotoxin-Cg1a (134 aa).

The N-terminal stretch at 1–19 (MKLAVVFLLTTVVFTLAQS) is a signal peptide. Disulfide bonds link C24–C35, C29–C53, and C63–C84. A disordered region spans residues 97–134 (EQSSTSTSSTQGPITSSTVTTQSEATTETETTTAAEGK). A compositionally biased stretch (low complexity) spans 99–134 (SSTSTSSTQGPITSSTVTTQSEATTETETTTAAEGK).

Belongs to the neurotoxin 32 family. In terms of tissue distribution, expressed by the venom gland.

It is found in the secreted. This is U34-theraphotoxin-Cg1a from Chilobrachys guangxiensis (Chinese earth tiger tarantula).